The following is a 537-amino-acid chain: Phosphoenolpyruvate carboxykinase (ATP) (537 aa).

The substrate site is built by R61, Y195, and K201. Residues K201, H220, and G236–T244 contribute to the ATP site. Residues K201 and H220 each coordinate Mn(2+). Residue D257 participates in Mn(2+) binding. Positions 285, 323, and 448 each coordinate ATP. Position 323 (R323) interacts with substrate.

It belongs to the phosphoenolpyruvate carboxykinase (ATP) family. Requires Mn(2+) as cofactor.

It localises to the cytoplasm. It catalyses the reaction oxaloacetate + ATP = phosphoenolpyruvate + ADP + CO2. It participates in carbohydrate biosynthesis; gluconeogenesis. Involved in the gluconeogenesis. Catalyzes the conversion of oxaloacetate (OAA) to phosphoenolpyruvate (PEP) through direct phosphoryl transfer between the nucleoside triphosphate and OAA. In Rhodopseudomonas palustris (strain ATCC BAA-98 / CGA009), this protein is Phosphoenolpyruvate carboxykinase (ATP).